A 489-amino-acid polypeptide reads, in one-letter code: MSVYGLQRLYIAGAHADATSGKTFDTFDPATGELLARVQQASADDVDRAVASAREGQREWAAMTAMQRSRILRRAVELLRERNNALAELEMRDTGKPIAETRAVDIVTGADVIEYYAGLATAIEGLQVPLRPESFVYTRREPLGVCAGIGAWNYPIQIACWKSAPALAAGNAMIFKPSEVTPLSALKLAEIYTEAGVPAGVFNVVQGDGSVGALLSAHPGIAKVSFTGGVETGKKVMSLAGASSLKEVTMELGGKSPLIVFDDADLDRAADIAVTANFFSAGQVCTNGTRVFVQQAVKDAFVERVLARVARIRAGKPSDPDTNFGPLASAAQLDKVLGYIDSGKAEGAKLLAGGARLVNDHFASGQYVAPTVFGDCRDDMRIVREEIFGPVMSILSFETEDEAIARANATDYGLAAGVVTENLSRAHRAIHRLEAGICWINTWGESPAEMPVGGYKQSGVGRENGITTLEHYTRIKSVQVELGRYQPVF.

K(+) contacts are provided by Thr-26 and Asp-93. 150 to 152 contacts NAD(+); the sequence is GAW. Residue Lys-162 is the Charge relay system of the active site. 176-179 is a binding site for NAD(+); that stretch reads KPSE. Residue Val-180 participates in K(+) binding. 229–232 lines the NAD(+) pocket; that stretch reads GVET. Leu-245 is a K(+) binding site. Glu-251 functions as the Proton acceptor in the catalytic mechanism. The NAD(+) site is built by Gly-253, Cys-285, and Glu-386. Cys-285 acts as the Nucleophile in catalysis. A Cysteine sulfenic acid (-SOH) modification is found at Cys-285. 2 residues coordinate K(+): Lys-456 and Gly-459. Glu-463 functions as the Charge relay system in the catalytic mechanism.

It belongs to the aldehyde dehydrogenase family. As to quaternary structure, dimer of dimers. Requires K(+) as cofactor.

The catalysed reaction is betaine aldehyde + NAD(+) + H2O = glycine betaine + NADH + 2 H(+). It participates in amine and polyamine biosynthesis; betaine biosynthesis via choline pathway; betaine from betaine aldehyde: step 1/1. In terms of biological role, involved in the biosynthesis of the osmoprotectant glycine betaine. Catalyzes the irreversible oxidation of betaine aldehyde to the corresponding acid. The sequence is that of Betaine aldehyde dehydrogenase from Burkholderia pseudomallei (strain 668).